A 538-amino-acid chain; its full sequence is MAGGGGGGGGVAPPLKHDGLEPHPVKDQLSSISYCITSPPPWPEAILLGFQHYLVMLGTTVLIPTYLVPQMGGGNEEKAKMVQTLLFVSGLNTLLQSFFGTRLPAVIGGSYTYVPTTLSIILAGRYSDILDPQEKFKRIMRGIQGALIVASILQIVVGFSGLWRNVVRLLSPLSAVPLVALAGFGLYEHGFPLLAKCIEIGLPEIILLLLFSQYIPHLIRGERQVFHRFAVIFSVVIVWIYAHLLTVGGAYKNTGVNTQTSCRTDRSGLISGSPWIRVPYPFQWGPPTFHAGEAFAMMAVSFVSLIESTGTYIVVSRFASATPPPPSVLSRGVGWQGVGVLLCGLFGAGNGASVSVENAGLLALTRVGSRRVVQISAGFMIFFSILGKFGAIFASIPAPVVAALHCLFFAYVGAGGLSLLQFCNLNSFRTKFILGFSVFMGLSIPQYFNQYTAVNKYGPVHTHARWFNDMINVPFSSKAFVAGILAFFLDVTMSSKDSATRKDRGMFWWDRFMSFKSDTRSEEFYSLPFNLNKYFPSV.

The segment covering 1–11 (MAGGGGGGGGV) has biased composition (gly residues). Residues 1-20 (MAGGGGGGGGVAPPLKHDGL) are disordered. A run of 12 helical transmembrane segments spans residues 45–65 (AILL…LIPT), 81–101 (MVQT…FFGT), 103–123 (LPAV…IILA), 143–163 (IQGA…SGLW), 166–186 (VVRL…GFGL), 191–211 (FPLL…LLLF), 229–249 (FAVI…TVGG), 295–315 (FAMM…YIVV), 372–394 (VVQI…AIFA), 398–420 (APVV…LSLL), 432–452 (FILG…NQYT), and 471–491 (INVP…FLDV).

It belongs to the nucleobase:cation symporter-2 (NCS2) (TC 2.A.40) family. Expressed exclusively in ovules.

It localises to the cell membrane. The polypeptide is Nucleobase-ascorbate transporter 7 (NAT7) (Arabidopsis thaliana (Mouse-ear cress)).